A 416-amino-acid polypeptide reads, in one-letter code: Phosphoglycerate kinase (416 aa).

Serine 2 is modified (N-acetylserine). Valine 23, aspartate 24, phenylalanine 25, asparagine 26, glutamine 38, arginine 39, serine 62, histidine 63, glycine 65, and arginine 66 together coordinate (2R)-3-phosphoglycerate. Lysine 82 participates in a covalent cross-link: Glycyl lysine isopeptide (Lys-Gly) (interchain with G-Cter in ubiquitin). Residue threonine 93 is modified to Phosphothreonine. Position 110 is a phosphoserine (serine 110). Leucine 121 and arginine 122 together coordinate (2R)-3-phosphoglycerate. 2 positions are modified to phosphoserine: serine 130 and serine 154. (2R)-3-phosphoglycerate-binding residues include histidine 168 and arginine 169. Serine 172 is subject to Phosphoserine. A Glycyl lysine isopeptide (Lys-Gly) (interchain with G-Cter in ubiquitin) cross-link involves residue lysine 197. Threonine 203 carries the post-translational modification Phosphothreonine. Glycine 212 contributes to the ADP binding site. Glycine 212 is a CDP binding site. AMP-binding residues include alanine 213 and lysine 214. Residues alanine 213 and lysine 214 each coordinate ATP. Alanine 213 is a Mg(2+) binding site. Residues alanine 216 and aspartate 217 each coordinate Mg(2+). Aspartate 217 lines the CDP pocket. Lysine 218 serves as a coordination point for AMP. Lysine 218 lines the ATP pocket. Glycine 236 is an ADP binding site. Glycine 236 provides a ligand contact to CDP. Residue glycine 237 participates in AMP binding. Residue glycine 237 coordinates ATP. Threonine 241 carries the post-translational modification Phosphothreonine. Glycyl lysine isopeptide (Lys-Gly) (interchain with G-Cter in ubiquitin) cross-links involve residues lysine 258 and lysine 274. Threonine 298 is subject to Phosphothreonine. Residue lysine 302 forms a Glycyl lysine isopeptide (Lys-Gly) (interchain with G-Cter in ubiquitin) linkage. Glycine 311 serves as a coordination point for AMP. Glycine 311 and leucine 312 together coordinate ATP. Position 318 is a phosphoserine (serine 318). Threonine 331 is subject to Phosphothreonine. Residue asparagine 335 participates in ATP binding. Glycine 336 and phenylalanine 341 together coordinate CDP. Position 341 (phenylalanine 341) interacts with ADP. Glutamate 342 is an AMP binding site. Glutamate 342 contributes to the ATP binding site. Glycine 371 serves as a coordination point for (2R)-3-phosphoglycerate. Aspartate 373 and threonine 374 together coordinate ATP. Aspartate 373 provides a ligand contact to Mg(2+). A Phosphothreonine modification is found at threonine 392. 2 residues coordinate (2R)-3-phosphoglycerate: glycine 394 and glycine 395.

The protein belongs to the phosphoglycerate kinase family. Monomer. Mg(2+) is required as a cofactor.

It is found in the cytoplasm. The protein resides in the mitochondrion. The catalysed reaction is (2R)-3-phosphoglycerate + ATP = (2R)-3-phospho-glyceroyl phosphate + ADP. The protein operates within carbohydrate degradation; glycolysis; pyruvate from D-glyceraldehyde 3-phosphate: step 2/5. Catalyzes one of the two ATP producing reactions in the glycolytic pathway via the reversible conversion of 1,3-diphosphoglycerate to 3-phosphoglycerate. Both L- and D- forms of purine and pyrimidine nucleotides can be used as substrates, but the activity is much lower on pyrimidines. Negatively regulates the biosynthesis of acetyl-CoA from pyruvate in the mitochondrion. The sequence is that of Phosphoglycerate kinase (PGK1) from Saccharomyces cerevisiae (strain ATCC 204508 / S288c) (Baker's yeast).